The chain runs to 722 residues: D-(-)-3-hydroxybutyrate oligomer hydrolase (722 aa).

A signal peptide spans 1-25 (MKTMQGKGSGRRLRGALLVTMAASG). Ser319 serves as the catalytic Charge relay system.

This sequence belongs to the D-(-)-3-hydroxybutyrate oligomer hydrolase family.

The protein localises to the secreted. The catalysed reaction is (3R)-hydroxybutanoate dimer + H2O = 2 (R)-3-hydroxybutanoate + H(+). It functions in the pathway lipid metabolism; butanoate metabolism. Its activity is regulated as follows. Inhibited by diisopropylfluorophosphate (DFP). Participates in the degradation of poly-3-hydroxybutyrate (PHB). It works downstream of poly(3-hydroxybutyrate) depolymerase, hydrolyzing D(-)-3-hydroxybutyrate oligomers of various length (3HB-oligomers) into 3HB-monomers. This Ralstonia pickettii (Burkholderia pickettii) protein is D-(-)-3-hydroxybutyrate oligomer hydrolase.